The following is a 210-amino-acid chain: Secreted effector protein SteA (210 aa).

It localises to the secreted. The protein localises to the host cytoplasm. Effector proteins function to alter host cell physiology and promote bacterial survival in host tissues. Could be required for passage of bacteria from the peritoneal cavity into the spleen, for survival and replication within host cells, or for avoiding host immune response. The protein is Secreted effector protein SteA (steA) of Salmonella typhimurium (strain 14028s / SGSC 2262).